The primary structure comprises 141 residues: MAKKVVAVIKLALNAGKANPAPPVGPALGQHGVNIMMFCKEYNAKTADQAGMVIPVEISVYEDRSFTFVLKTPPASVLIRKAAKIERGSNEPNKKKVGTITTAQLREIAQTKLPDLNANDIDAAMKIVAGTARNMGVTVTD.

Belongs to the universal ribosomal protein uL11 family. In terms of assembly, part of the ribosomal stalk of the 50S ribosomal subunit. Interacts with L10 and the large rRNA to form the base of the stalk. L10 forms an elongated spine to which L12 dimers bind in a sequential fashion forming a multimeric L10(L12)X complex. One or more lysine residues are methylated.

Forms part of the ribosomal stalk which helps the ribosome interact with GTP-bound translation factors. The sequence is that of Large ribosomal subunit protein uL11 from Nostoc sp. (strain PCC 7120 / SAG 25.82 / UTEX 2576).